A 98-amino-acid polypeptide reads, in one-letter code: Nuclear protein 2 (98 aa).

A compositionally biased stretch (low complexity) spans 1 to 11 (MEPAAPTVQPR). 2 disordered regions span residues 1–24 (MEPA…PPVG) and 78–98 (LNSQ…TRLT). Residues 81–98 (QRKRRQRQLQPRPRTRLT) are compositionally biased toward basic residues.

Belongs to the NUPR family.

It is found in the nucleus. Its function is as follows. Acts as a transcriptional repressor by inhibiting gene expression at the NUPR1 promoter in a p53/TP53-dependent manner in cancer cells. Involved in the G1 cell cycle arrest, and in a decrease in cell viability and cell proliferation. Plays a role as a negative regulator of the protumoral factor NUPR1. This Bos taurus (Bovine) protein is Nuclear protein 2.